Consider the following 99-residue polypeptide: NADH-quinone oxidoreductase subunit K (99 aa).

The next 3 helical transmembrane spans lie at 3-23 (PMYYLYLSAVLFTLGAVGVLL), 28-48 (IIVFMCVELMLNAANLALVTF), and 62-82 (FFVMVVAAAEVVVGLAIIVAI).

This sequence belongs to the complex I subunit 4L family. NDH-1 is composed of 14 different subunits. Subunits NuoA, H, J, K, L, M, N constitute the membrane sector of the complex.

The protein localises to the cell membrane. It catalyses the reaction a quinone + NADH + 5 H(+)(in) = a quinol + NAD(+) + 4 H(+)(out). NDH-1 shuttles electrons from NADH, via FMN and iron-sulfur (Fe-S) centers, to quinones in the respiratory chain. The immediate electron acceptor for the enzyme in this species is believed to be a menaquinone. Couples the redox reaction to proton translocation (for every two electrons transferred, four hydrogen ions are translocated across the cytoplasmic membrane), and thus conserves the redox energy in a proton gradient. This chain is NADH-quinone oxidoreductase subunit K, found in Acidothermus cellulolyticus (strain ATCC 43068 / DSM 8971 / 11B).